We begin with the raw amino-acid sequence, 650 residues long: 1-deoxy-D-xylulose-5-phosphate synthase 2 (650 aa).

Thiamine diphosphate is bound by residues His79 and 120-122; that span reads AHS. Asp151 provides a ligand contact to Mg(2+). Thiamine diphosphate contacts are provided by residues 152-153, Asn180, Tyr289, and Glu371; that span reads GS. Position 180 (Asn180) interacts with Mg(2+).

This sequence belongs to the transketolase family. DXPS subfamily. As to quaternary structure, homodimer. Requires Mg(2+) as cofactor. Thiamine diphosphate serves as cofactor.

The catalysed reaction is D-glyceraldehyde 3-phosphate + pyruvate + H(+) = 1-deoxy-D-xylulose 5-phosphate + CO2. Its pathway is metabolic intermediate biosynthesis; 1-deoxy-D-xylulose 5-phosphate biosynthesis; 1-deoxy-D-xylulose 5-phosphate from D-glyceraldehyde 3-phosphate and pyruvate: step 1/1. Functionally, catalyzes the acyloin condensation reaction between C atoms 2 and 3 of pyruvate and glyceraldehyde 3-phosphate to yield 1-deoxy-D-xylulose-5-phosphate (DXP). The sequence is that of 1-deoxy-D-xylulose-5-phosphate synthase 2 from Zymomonas mobilis subsp. mobilis (strain ATCC 31821 / ZM4 / CP4).